The following is a 424-amino-acid chain: Hemagglutinin-esterase (424 aa).

A signal peptide spans 1-16 (MFLLPRFVLVSCIIGS). The segment at 7–127 (FVLVSCIIGS…SNDIWMQNKG (121 aa)) is esterase domain 1. Residues 17–392 (LGFDNPPTNV…PICVYDPLPI (376 aa)) are Virion surface-facing. The Nucleophile role is filled by Ser40. A disulfide bridge links Cys44 with Cys65. Residues Asn54, Asn89, Asn153, Asn236, and Asn301 are each glycosylated (N-linked (GlcNAc...) asparagine; by host). Cystine bridges form between Cys113–Cys162, Cys197–Cys276, and Cys205–Cys249. The receptor binding stretch occupies residues 128–266 (LFYTQLYKNM…GNYLAISNEL (139 aa)). The interval 267–379 (LLTVPTKAIC…RCPTAADINT (113 aa)) is esterase domain 2. Cys307 and Cys312 are oxidised to a cystine. Residue Asn316 is glycosylated (N-linked (GlcNAc...) asparagine; by host). Residues Asp326 and His329 each act as charge relay system in the active site. The cysteines at positions 347 and 371 are disulfide-linked. Asn358 is a glycosylation site (N-linked (GlcNAc...) asparagine; by host). A helical transmembrane segment spans residues 393–413 (ILLGILLGVAVIIIVVLLLYF). Over 414 to 424 (MVDNGTRLHDA) the chain is Intravirion. A glycan (N-linked (GlcNAc...) asparagine; by host) is linked at Asn417.

Belongs to the influenza type C/coronaviruses hemagglutinin-esterase family. In terms of assembly, homodimer; disulfide-linked. Forms a complex with the M protein in the pre-Golgi. Associates then with S-M complex to form a ternary complex S-M-HE. Post-translationally, N-glycosylated in the host RER.

It is found in the virion membrane. Its subcellular location is the host cell membrane. The catalysed reaction is N-acetyl-9-O-acetylneuraminate + H2O = N-acetylneuraminate + acetate + H(+). The enzyme catalyses N-acetyl-4-O-acetylneuraminate + H2O = N-acetylneuraminate + acetate + H(+). In terms of biological role, structural protein that makes short spikes at the surface of the virus. Contains receptor binding and receptor-destroying activities. Mediates de-O-acetylation of N-acetyl-4-O-acetylneuraminic acid, which is probably the receptor determinant recognized by the virus on the surface of erythrocytes and susceptible cells. This receptor-destroying activity is important for virus release as it probably helps preventing self-aggregation and ensures the efficient spread of the progeny virus from cell to cell. May serve as a secondary viral attachment protein for initiating infection, the spike protein being the major one. May become a target for both the humoral and the cellular branches of the immune system. The polypeptide is Hemagglutinin-esterase (Bovine coronavirus (strain LSU-94LSS-051) (BCoV-LSU)).